The following is a 316-amino-acid chain: Protoheme IX farnesyltransferase (316 aa).

The next 9 helical transmembrane spans lie at 34-54 (VMSLVVFTAFAGLVLAPGHIN), 55-75 (PFIGFTAILCIAIGAGASGAL), 95-115 (IPAGKILPQEALAFGLTLSAF), 118-138 (IILGLAVHWLAAGLLAFTIFF), 155-175 (IVIGGAAGAFPPMIGWACVTG), 182-202 (IVLFLIIFLWTPAHFWALALF), 228-250 (IVIYAVLTAVSGVCPTLLGFASL), 254-273 (AFATVMGLGFVWYSLGVLRM), and 287-307 (FAFSIAYLFAIFSALLVDYAI).

Belongs to the UbiA prenyltransferase family. Protoheme IX farnesyltransferase subfamily.

The protein resides in the cell inner membrane. It carries out the reaction heme b + (2E,6E)-farnesyl diphosphate + H2O = Fe(II)-heme o + diphosphate. The protein operates within porphyrin-containing compound metabolism; heme O biosynthesis; heme O from protoheme: step 1/1. In terms of biological role, converts heme B (protoheme IX) to heme O by substitution of the vinyl group on carbon 2 of heme B porphyrin ring with a hydroxyethyl farnesyl side group. In Rhizobium meliloti (strain 1021) (Ensifer meliloti), this protein is Protoheme IX farnesyltransferase.